The primary structure comprises 1166 residues: Reverse gyrase (1166 aa).

An RG N-terminal-type zinc finger spans residues 1-40; it reads MINVMYKNSCPNCGGDISADRLLNGLPCETCLPYINGIDG. 4 residues coordinate Zn(2+): Cys10, Cys13, Cys28, and Cys31. ATP is bound by residues Gln92 and 109–116; that span reads APTGLGKT. The 190-residue stretch at 96 to 285 folds into the Helicase ATP-binding domain; the sequence is LRRLVSNQSF…ALRLLTGFEP (190 aa). The short motif at 190-193 is the DEAD box element; the sequence is DDAD. The tract at residues 576-1166 is topoisomerase I; the sequence is FNISTGLLIV…VNPLKSEQNV (591 aa). Positions 580 to 743 constitute a Toprim domain; it reads TGLLIVESPT…NIYRITYHEI (164 aa). Residue Glu586 coordinates Mg(2+). The segment at 662–689 adopts an RG C-terminal-type zinc-finger fold; that stretch reads IKKCLDCNKTFSIASDKCPYCGSTNVQT. Zn(2+) contacts are provided by Cys665, Cys668, Cys679, and Cys682. Asp712 is a binding site for Mg(2+). Residues 759–1157 form the Topo IA-type catalytic domain; it reads NTNLVMSQIV…EIFSEISTLV (399 aa). The O-(5'-phospho-DNA)-tyrosine intermediate role is filled by Tyr903.

In the N-terminal section; belongs to the DEAD box helicase family. DDVD subfamily. It in the C-terminal section; belongs to the type IA topoisomerase family. Monomer. The cofactor is Zn(2+). It depends on Mg(2+) as a cofactor.

It localises to the cytoplasm. The catalysed reaction is ATP + H2O = ADP + phosphate + H(+). With respect to regulation, inhibited by UV light-induced lesions; substrate is completely cleaved but a nicked form accumulates, suggesting the reaction is blocked between the cleavage and ligation steps. Inhibited by actinomycin D; substrate DNA remains negatively supercoiled in this case. Activity is stimulated by SSB from S.solfataricus strain P2. Positive supercoiling is inhibited by Sul7d (also called Sso7d) from S.solfataricus strain MT4; SSB from S.solfataricus strain P2 relieves this inhibition. Its function is as follows. Modifies the topological state of DNA by introducing positive supercoils in an ATP-dependent process. Increases the linking number in steps of +1. In vitro requires high concentrations to supercoil negatively supercoiled DNA, relaxes plasmid DNA first; DNA single-strand binding protein (SSB) from S.solfataricus strain P2 stimulates positive supercoiling. SSB stimulates DNA-binding by reverse gyrase, and thus all subsequent steps. Binds to single-stranded DNA, transiently cleaves and then rejoins the ends, introducing a positive supercoil in the process. The scissile phosphodiester is attacked by the catalytic tyrosine of the enzyme, resulting in the formation of a DNA-(5'-phosphotyrosyl)-enzyme intermediate. May be involved in DNA damage response. Probably involved in rewinding DNA strands in regions of the chromosome that have opened up to allow replication, transcription, DNA repair and/or for DNA protection. The protein is Reverse gyrase of Saccharolobus shibatae (strain ATCC 51178 / DSM 5389 / JCM 8931 / NBRC 15437 / B12) (Sulfolobus shibatae).